Reading from the N-terminus, the 317-residue chain is Acetyl-coenzyme A carboxylase carboxyl transferase subunit alpha (317 aa).

In terms of domain architecture, CoA carboxyltransferase C-terminal spans 39-293 (RLQKKSNDLT…KAVLEKQLHE (255 aa)).

The protein belongs to the AccA family. Acetyl-CoA carboxylase is a heterohexamer composed of biotin carboxyl carrier protein (AccB), biotin carboxylase (AccC) and two subunits each of ACCase subunit alpha (AccA) and ACCase subunit beta (AccD).

It localises to the cytoplasm. The enzyme catalyses N(6)-carboxybiotinyl-L-lysyl-[protein] + acetyl-CoA = N(6)-biotinyl-L-lysyl-[protein] + malonyl-CoA. The protein operates within lipid metabolism; malonyl-CoA biosynthesis; malonyl-CoA from acetyl-CoA: step 1/1. Its function is as follows. Component of the acetyl coenzyme A carboxylase (ACC) complex. First, biotin carboxylase catalyzes the carboxylation of biotin on its carrier protein (BCCP) and then the CO(2) group is transferred by the carboxyltransferase to acetyl-CoA to form malonyl-CoA. This chain is Acetyl-coenzyme A carboxylase carboxyl transferase subunit alpha, found in Neisseria gonorrhoeae (strain NCCP11945).